Consider the following 101-residue polypeptide: Small ribosomal subunit protein uS14 (101 aa).

A compositionally biased stretch (basic and acidic residues) spans M1 to N10. A disordered region spans residues M1 to K23. Positions N11–K23 are enriched in basic residues.

This sequence belongs to the universal ribosomal protein uS14 family. In terms of assembly, part of the 30S ribosomal subunit. Contacts proteins S3 and S10.

In terms of biological role, binds 16S rRNA, required for the assembly of 30S particles and may also be responsible for determining the conformation of the 16S rRNA at the A site. This Rhodopseudomonas palustris (strain TIE-1) protein is Small ribosomal subunit protein uS14.